Consider the following 166-residue polypeptide: NAD(P)H-quinone oxidoreductase subunit I, chloroplastic (166 aa).

4Fe-4S ferredoxin-type domains are found at residues 55-84 (GRIH…VDWQ) and 95-124 (VNYS…MTEE). [4Fe-4S] cluster contacts are provided by Cys-64, Cys-67, Cys-70, Cys-74, Cys-104, Cys-107, Cys-110, and Cys-114.

This sequence belongs to the complex I 23 kDa subunit family. In terms of assembly, NDH is composed of at least 16 different subunits, 5 of which are encoded in the nucleus. [4Fe-4S] cluster is required as a cofactor.

The protein resides in the plastid. The protein localises to the chloroplast thylakoid membrane. It carries out the reaction a plastoquinone + NADH + (n+1) H(+)(in) = a plastoquinol + NAD(+) + n H(+)(out). It catalyses the reaction a plastoquinone + NADPH + (n+1) H(+)(in) = a plastoquinol + NADP(+) + n H(+)(out). In terms of biological role, NDH shuttles electrons from NAD(P)H:plastoquinone, via FMN and iron-sulfur (Fe-S) centers, to quinones in the photosynthetic chain and possibly in a chloroplast respiratory chain. The immediate electron acceptor for the enzyme in this species is believed to be plastoquinone. Couples the redox reaction to proton translocation, and thus conserves the redox energy in a proton gradient. The protein is NAD(P)H-quinone oxidoreductase subunit I, chloroplastic of Coreopsis petrophiloides (Tickseed).